We begin with the raw amino-acid sequence, 217 residues long: NADH dehydrogenase (ubiquinone) 23 kDa subunit (217 aa).

The N-terminal 26 residues, 1-26, are a transit peptide targeting the mitochondrion; that stretch reads MSLTMRIFTASRNGQRLFGSHGARLL. 4Fe-4S ferredoxin-type domains are found at residues 109 to 138 and 148 to 177; these read RRYPSGEERCIACKLCEAICPAQAITIEAE and TRYDIDMTKCIYCGFCQEACPVDAIVEGPN. 8 residues coordinate [4Fe-4S] cluster: Cys118, Cys121, Cys124, Cys128, Cys157, Cys160, Cys163, and Cys167.

Belongs to the complex I 23 kDa subunit family. Part of the mitochondrial membrane respiratory chain NADH dehydrogenase (Complex I). This is a component of the iron-sulfur (IP) fragment of the enzyme. The cofactor is [4Fe-4S] cluster. Expressed in muscles (at protein level).

It is found in the mitochondrion. It carries out the reaction a ubiquinone + NADH + 5 H(+)(in) = a ubiquinol + NAD(+) + 4 H(+)(out). Core subunit of the mitochondrial membrane respiratory chain NADH dehydrogenase (Complex I) that is believed to belong to the minimal assembly required for catalysis. Complex I functions in the transfer of electrons from NADH to the respiratory chain. The immediate electron acceptor for the enzyme is believed to be ubiquinone. The sequence is that of NADH dehydrogenase (ubiquinone) 23 kDa subunit from Drosophila melanogaster (Fruit fly).